The following is a 330-amino-acid chain: Tryptophan--tRNA ligase (330 aa).

Residues 10–12 (QTT) and 18–19 (GN) each bind ATP. A 'HIGH' region motif is present at residues 11–19 (TTGALHLGN). Position 134 (D134) interacts with L-tryptophan. Residues 146 to 148 (GED), I186, and 195 to 199 (KMSKS) contribute to the ATP site. A 'KMSKS' region motif is present at residues 195–199 (KMSKS).

It belongs to the class-I aminoacyl-tRNA synthetase family. Homodimer.

It localises to the cytoplasm. The enzyme catalyses tRNA(Trp) + L-tryptophan + ATP = L-tryptophyl-tRNA(Trp) + AMP + diphosphate + H(+). Its function is as follows. Catalyzes the attachment of tryptophan to tRNA(Trp). The protein is Tryptophan--tRNA ligase of Rickettsia prowazekii (strain Madrid E).